The sequence spans 302 residues: MISNGQAFFQAPSYLFTPIKLNLALHVVGQRADGYHLIESLVYFSLSGDCLSCTPFGSNRFVLTGPFADELVSDAENLVVRAHDFMCNTFPECAKPAFFQLVKLLPVASGVGGGSGNAAGVLSLLRQQWALDCSCEKLAEMSLVLGADVPMCLFALEYQQPLFVKGIGQDITRLKEACSLAMVLVNHGQQIATKTVFKALEKRDHPPLKIDSAALKTVDSLVEALQETRNDLFVPALKIAPQLSEVLCALDESGALFSRMSGTGATCFGIFKDKQAAQQAALFIKAMYPDWFVKPIVTLAKL.

Lysine 20 is a catalytic residue. 106 to 116 contacts ATP; the sequence is PVASGVGGGSG. Aspartate 148 is an active-site residue.

This sequence belongs to the GHMP kinase family. IspE subfamily.

The enzyme catalyses 4-CDP-2-C-methyl-D-erythritol + ATP = 4-CDP-2-C-methyl-D-erythritol 2-phosphate + ADP + H(+). It participates in isoprenoid biosynthesis; isopentenyl diphosphate biosynthesis via DXP pathway; isopentenyl diphosphate from 1-deoxy-D-xylulose 5-phosphate: step 3/6. Functionally, catalyzes the phosphorylation of the position 2 hydroxy group of 4-diphosphocytidyl-2C-methyl-D-erythritol. The protein is 4-diphosphocytidyl-2-C-methyl-D-erythritol kinase of Bartonella henselae (strain ATCC 49882 / DSM 28221 / CCUG 30454 / Houston 1) (Rochalimaea henselae).